The chain runs to 547 residues: MSSSILNNRSARSTPAGANPAFNPPAEASSSSTQSGVPYIRENSPEAESIPSNPAMTPIITHGDSLASPGGRNSEADTVVPLQPAVSQDAIRSRPGSRTGNFVTPKAARFSQDGAEPIMQYSSGSVKSARRRTREREDYDFDQAADYAPMSEYERYYRNEGRNDRDRYTRRGPYPPPTFMNRRRAPPLDSDEEFYSSDDPRIPPNDRRRMMDEEAGYPGRPHAFRRTSTLNGFNITTGKLQWNELSRQEKSEIMRLPLTQWMNSNFKNHFVAGVGEFIGTTMFLFFAFAGTEVANIQADTTNRTTTGESTGSLNVSKLLYISIIFGFSLMVNVWVFFRISGGLFNPAVTMAMLMVKAISVTRAIVLFLAQILGSMLASVVVRYLFPETFNVRTTLGGGASLVQGVFIEALLTAELVFTIFMLAKEKHRATFIAPVGIGLALFIAEMVGVQFTGGSLNPARSFGPCVITGSFDTEHWIYWVGPAIGSLIAVCFYWFIKTLEYEMANPGADGDDLNDPTKNPEKRAEIQASKPVPTAAFGSGKTASILS.

The segment covering 1–13 (MSSSILNNRSARS) has biased composition (polar residues). The interval 1-208 (MSSSILNNRS…DPRIPPNDRR (208 aa)) is disordered. The Cytoplasmic portion of the chain corresponds to 1 to 269 (MSSSILNNRS…QWMNSNFKNH (269 aa)). A compositionally biased stretch (low complexity) spans 15-32 (PAGANPAFNPPAEASSSS). 2 stretches are compositionally biased toward basic and acidic residues: residues 152 to 169 (EYER…DRYT) and 198 to 208 (DDPRIPPNDRR). A helical membrane pass occupies residues 270-290 (FVAGVGEFIGTTMFLFFAFAG). Over 291-316 (TEVANIQADTTNRTTTGESTGSLNVS) the chain is Extracellular. Residues N302 and N314 are each glycosylated (N-linked (GlcNAc...) asparagine). A helical membrane pass occupies residues 317-337 (KLLYISIIFGFSLMVNVWVFF). Topologically, residues 338 to 363 (RISGGLFNPAVTMAMLMVKAISVTRA) are cytoplasmic. Residues 345-347 (NPA) carry the NPA 1 motif. A helical transmembrane segment spans residues 364-384 (IVLFLAQILGSMLASVVVRYL). At 385–400 (FPETFNVRTTLGGGAS) the chain is on the extracellular side. The chain crosses the membrane as a helical span at residues 401–421 (LVQGVFIEALLTAELVFTIFM). Residues 422–428 (LAKEKHR) are Cytoplasmic-facing. Residues 429-449 (ATFIAPVGIGLALFIAEMVGV) traverse the membrane as a helical segment. Residues 450 to 475 (QFTGGSLNPARSFGPCVITGSFDTEH) lie on the Extracellular side of the membrane. An NPA 2 motif is present at residues 457–459 (NPA). A helical transmembrane segment spans residues 476–496 (WIYWVGPAIGSLIAVCFYWFI). Residues 497-547 (KTLEYEMANPGADGDDLNDPTKNPEKRAEIQASKPVPTAAFGSGKTASILS) lie on the Cytoplasmic side of the membrane. The disordered stretch occupies residues 510–547 (GDDLNDPTKNPEKRAEIQASKPVPTAAFGSGKTASILS).

This sequence belongs to the MIP/aquaporin (TC 1.A.8) family.

Its subcellular location is the membrane. It catalyses the reaction H2O(in) = H2O(out). Functionally, probable water channel that may have redundant functions with FgAQP3. The polypeptide is Probable aquaporin-5 (Gibberella zeae (strain ATCC MYA-4620 / CBS 123657 / FGSC 9075 / NRRL 31084 / PH-1) (Wheat head blight fungus)).